Consider the following 469-residue polypeptide: Spliceosome-associated protein CWC27 homolog (469 aa).

Ser2 bears the N-acetylserine mark. Residues 11–166 (TNGKVLLKTT…NPHRIKSCEV (156 aa)) form the PPIase cyclophilin-type domain. The span at 175 to 193 (TPREIKKPKNEKPEEEVKK) shows a compositional bias: basic and acidic residues. Disordered regions lie at residues 175–415 (TPRE…DDEG) and 428–469 (RKVK…KERR). Residues 206–229 (SFGEEAEEEEEEVNRVSQSMKGRS) adopt a coiled-coil conformation. A compositionally biased stretch (basic and acidic residues) spans 231–241 (SSHDLLKDDPH). Positions 256-278 (TGDLEDDGEDDSAERDEYMEDDE) are enriched in acidic residues. Composition is skewed to basic and acidic residues over residues 302–341 (GDGEKKPASRSEELRKEARQLKRELLAAKQKKETAIKVEE) and 356–368 (EYRREKQKYEALR). Residues 309–371 (ASRSEELRKE…QKYEALRKQQ (63 aa)) adopt a coiled-coil conformation. Over residues 384 to 403 (ALLSQFKSKLTQAITETPEN) the composition is skewed to polar residues. Residues 454–469 (RREESKKLLREKKERR) show a composition bias toward basic and acidic residues.

Belongs to the cyclophilin-type PPIase family. As to quaternary structure, part of the activated spliceosome B/catalytic step 1 spliceosome, one of the forms of the spliceosome which has a well-formed active site but still cannot catalyze the branching reaction and is composed at least of 52 proteins, the U2, U5 and U6 snRNAs and the pre-mRNA. Recruited during early steps of activated spliceosome B maturation, it is probably one of the first proteins released from this complex as he matures to the spliceosome C complex. Component of the minor spliceosome, which splices U12-type introns.

The protein resides in the nucleus. In terms of biological role, as part of the spliceosome, plays a role in pre-mRNA splicing. Probable inactive PPIase with no peptidyl-prolyl cis-trans isomerase activity. As a component of the minor spliceosome, involved in the splicing of U12-type introns in pre-mRNAs. The sequence is that of Spliceosome-associated protein CWC27 homolog from Mus musculus (Mouse).